Reading from the N-terminus, the 105-residue chain is Large ribosomal subunit protein uL24 (105 aa).

This sequence belongs to the universal ribosomal protein uL24 family. Part of the 50S ribosomal subunit.

One of two assembly initiator proteins, it binds directly to the 5'-end of the 23S rRNA, where it nucleates assembly of the 50S subunit. In terms of biological role, one of the proteins that surrounds the polypeptide exit tunnel on the outside of the subunit. In Methylococcus capsulatus (strain ATCC 33009 / NCIMB 11132 / Bath), this protein is Large ribosomal subunit protein uL24.